We begin with the raw amino-acid sequence, 42 residues long: Photosystem I reaction center subunit IX (42 aa).

A helical membrane pass occupies residues 8 to 28 (YLSTAPVLLTIWLSFTAALVI).

Belongs to the PsaJ family.

The protein resides in the plastid. It localises to the chloroplast thylakoid membrane. In terms of biological role, may help in the organization of the PsaE and PsaF subunits. The sequence is that of Photosystem I reaction center subunit IX from Guillardia theta (Cryptophyte).